The primary structure comprises 270 residues: Probable ribosomal RNA small subunit methyltransferase A (270 aa).

Residues H19, L21, G46, E67, D92, and N107 each contribute to the S-adenosyl-L-methionine site.

The protein belongs to the class I-like SAM-binding methyltransferase superfamily. rRNA adenine N(6)-methyltransferase family. RsmA subfamily.

The protein localises to the cytoplasm. Specifically dimethylates two adjacent adenosines in the loop of a conserved hairpin near the 3'-end of 16S rRNA in the 30S particle. May play a critical role in biogenesis of 30S subunits. This chain is Probable ribosomal RNA small subunit methyltransferase A, found in Methanococcoides burtonii (strain DSM 6242 / NBRC 107633 / OCM 468 / ACE-M).